The chain runs to 465 residues: Methylenetetrahydrofolate--tRNA-(uracil-5-)-methyltransferase TrmFO (465 aa).

11 to 16 (GGGLAG) serves as a coordination point for FAD.

The protein belongs to the MnmG family. TrmFO subfamily. FAD serves as cofactor.

The protein localises to the cytoplasm. It carries out the reaction uridine(54) in tRNA + (6R)-5,10-methylene-5,6,7,8-tetrahydrofolate + NADH + H(+) = 5-methyluridine(54) in tRNA + (6S)-5,6,7,8-tetrahydrofolate + NAD(+). It catalyses the reaction uridine(54) in tRNA + (6R)-5,10-methylene-5,6,7,8-tetrahydrofolate + NADPH + H(+) = 5-methyluridine(54) in tRNA + (6S)-5,6,7,8-tetrahydrofolate + NADP(+). Its function is as follows. Catalyzes the folate-dependent formation of 5-methyl-uridine at position 54 (M-5-U54) in all tRNAs. This Acaryochloris marina (strain MBIC 11017) protein is Methylenetetrahydrofolate--tRNA-(uracil-5-)-methyltransferase TrmFO.